Consider the following 314-residue polypeptide: Vomeronasal type-1 receptor 95 (314 aa).

At 1–18 (MNKDNTLYCSAYRIAFFS) the chain is on the extracellular side. Residues 19–39 (EIGIGISANSCLLLFHTFMFI) form a helical membrane-spanning segment. The Cytoplasmic segment spans residues 40-48 (RGHRPRLTD). Residues 49–69 (LPIGLVALIHLVMLLLAAYIT) form a helical membrane-spanning segment. Residues 70-88 (EDFFMSSGGWDDITCKLFI) lie on the Extracellular side of the membrane. An intrachain disulfide couples cysteine 84 to cysteine 171. A helical membrane pass occupies residues 89–113 (FLHRFFRSLSVCDTCMLSVFQAIIL). Topologically, residues 114–133 (CPQSSHLAKFKLNSPHHLSC) are cytoplasmic. A helical membrane pass occupies residues 134–154 (FFIFMSIFYTSISSHILIAAI). Residues 155–186 (ATQNLTSVNLIYITKSCSFLPMSSSMQRTFST) lie on the Extracellular side of the membrane. N-linked (GlcNAc...) asparagine glycosylation occurs at asparagine 158. The chain crosses the membrane as a helical span at residues 187–207 (LLAFRNVFLIGLMGLSTCYMA). The Cytoplasmic portion of the chain corresponds to 208-235 (TLLCRHKTRSQQLQNSKLSPKATPEQRA). Residues 236 to 256 (IWTILMLMSFFLIISTFDSIM) form a helical membrane-spanning segment. Residues 257–268 (TYSRTIFQGNQS) lie on the Extracellular side of the membrane. A glycan (N-linked (GlcNAc...) asparagine) is linked at asparagine 266. A helical membrane pass occupies residues 269–289 (LYCVQIPVAHGYAAFSPLLVL). The Cytoplasmic portion of the chain corresponds to 290 to 314 (NNEKRLTSLMISMYDRIVRLESLCS).

This sequence belongs to the G-protein coupled receptor 1 family.

Its subcellular location is the cell membrane. Its function is as follows. Putative pheromone receptor implicated in the regulation of social as well as reproductive behavior. The polypeptide is Vomeronasal type-1 receptor 95 (Vom1r95) (Rattus norvegicus (Rat)).